A 98-amino-acid polypeptide reads, in one-letter code: Small ribosomal subunit protein uS17 (98 aa).

The protein belongs to the universal ribosomal protein uS17 family. Part of the 30S ribosomal subunit.

In terms of biological role, one of the primary rRNA binding proteins, it binds specifically to the 5'-end of 16S ribosomal RNA. This chain is Small ribosomal subunit protein uS17, found in Carboxydothermus hydrogenoformans (strain ATCC BAA-161 / DSM 6008 / Z-2901).